A 671-amino-acid polypeptide reads, in one-letter code: Envelope glycoprotein (671 aa).

Positions 1–22 (MKPPAGMVFLWVLTSLGAGIGA) are cleaved as a signal peptide. The Extracellular segment spans residues 23 to 611 (KIVKEGNPHQ…YNKSPWFTTL (589 aa)). Intrachain disulfides connect C121–C142 and C134–C147. Residues N169 and N281 are each glycosylated (N-linked (GlcNAc...) asparagine; by host). The interval 265–310 (VQPPRAPTQTPRVNPVNSTLSPSLGYPAPAPGPRPPYPTSPSRPGT) is disordered. The span at 271–286 (PTQTPRVNPVNSTLSP) shows a compositional bias: polar residues. Positions 292–305 (APAPGPRPPYPTSP) are enriched in pro residues. 2 N-linked (GlcNAc...) asparagine; by host glycosylation sites follow: N326 and N331. Residues 336-339 (CWLC) carry the CXXC motif. 4 N-linked (GlcNAc...) asparagine; by host glycosylation sites follow: N355, N358, N415, and N435. A fusion peptide region spans residues 473-493 (VSLTVALLLGGLTMGSLAAGI). Coiled-coil stretches lie at residues 501 to 550 (IETN…LLFL) and 560 to 596 (KEEC…SQQG). The segment at 539–555 (LQNRRGLDLLFLQEGGL) is immunosuppression. The short motif at 556–564 (CAALKEECC) is the CX6CC element. Residues 612–632 (VSSLMVPLILLLLILMFGPCI) traverse the membrane as a helical segment. C631 carries S-palmitoyl cysteine; by host lipidation. Topologically, residues 633-671 (LNHLLQFIRERLSVIQALVLTQQYHQLRQFDAERPDAIE) are cytoplasmic. The short motif at 656 to 659 (YHQL) is the YXXL motif; contains endocytosis signal element.

In terms of assembly, the mature envelope protein (Env) consists of a trimer of SU-TM heterodimers attached by noncovalent interactions or by a labile interchain disulfide bond. In terms of processing, specific enzymatic cleavages in vivo yield mature proteins. Envelope glycoproteins are synthesized as an inactive precursor that is N-glycosylated and processed likely by host cell furin or by a furin-like protease in the Golgi to yield the mature SU and TM proteins. The cleavage site between SU and TM requires the minimal sequence [KR]-X-[KR]-R. The R-peptide is released from the C-terminus of the cytoplasmic tail of the TM protein upon particle formation as a result of proteolytic cleavage by the viral protease. Cleavage of this peptide is required for TM to become fusogenic. Post-translationally, the transmembrane protein is palmitoylated. The R-peptide is palmitoylated.

Its subcellular location is the virion membrane. The protein resides in the host cell membrane. In terms of biological role, the surface protein (SU) attaches the virus to the host cell by binding to its receptor. This interaction triggers the refolding of the transmembrane protein (TM) and is thought to activate its fusogenic potential by unmasking its fusion peptide. Fusion occurs at the host cell plasma membrane. Its function is as follows. The transmembrane protein (TM) acts as a class I viral fusion protein. Under the current model, the protein has at least 3 conformational states: pre-fusion native state, pre-hairpin intermediate state, and post-fusion hairpin state. During viral and target cell membrane fusion, the coiled coil regions (heptad repeats) assume a trimer-of-hairpins structure, positioning the fusion peptide in close proximity to the C-terminal region of the ectodomain. The formation of this structure appears to drive apposition and subsequent fusion of viral and target cell membranes. Membranes fusion leads to delivery of the nucleocapsid into the cytoplasm. This is Envelope glycoprotein (env) from Felidae (cat family).